The sequence spans 85 residues: uncharacterized protein (85 aa).

This is an uncharacterized protein from Saimiriine herpesvirus 2 (strain 488) (SaHV-2).